We begin with the raw amino-acid sequence, 120 residues long: NAD(P)H-quinone oxidoreductase subunit 3, chloroplastic (120 aa).

The next 3 helical transmembrane spans lie at 9–29, 64–84, and 88–108; these read IFWAFLIISSLIPILAFFISG, MFALVFVVFDVETVFLYPWAM, and VLGVSVFIEALIFVLILIVGL.

This sequence belongs to the complex I subunit 3 family. As to quaternary structure, NDH is composed of at least 16 different subunits, 5 of which are encoded in the nucleus.

Its subcellular location is the plastid. It localises to the chloroplast thylakoid membrane. It carries out the reaction a plastoquinone + NADH + (n+1) H(+)(in) = a plastoquinol + NAD(+) + n H(+)(out). The enzyme catalyses a plastoquinone + NADPH + (n+1) H(+)(in) = a plastoquinol + NADP(+) + n H(+)(out). In terms of biological role, NDH shuttles electrons from NAD(P)H:plastoquinone, via FMN and iron-sulfur (Fe-S) centers, to quinones in the photosynthetic chain and possibly in a chloroplast respiratory chain. The immediate electron acceptor for the enzyme in this species is believed to be plastoquinone. Couples the redox reaction to proton translocation, and thus conserves the redox energy in a proton gradient. This Panax ginseng (Korean ginseng) protein is NAD(P)H-quinone oxidoreductase subunit 3, chloroplastic.